A 229-amino-acid chain; its full sequence is Chromophore lyase CpcT/CpeT 1 (229 aa).

The protein belongs to the CpcT/CpeT biliprotein lyase family.

Functionally, covalently attaches a chromophore to Cys residue(s) of phycobiliproteins. This chain is Chromophore lyase CpcT/CpeT 1, found in Gloeobacter violaceus (strain ATCC 29082 / PCC 7421).